The sequence spans 104 residues: ATP-dependent Clp protease adapter protein ClpS (104 aa).

This sequence belongs to the ClpS family. As to quaternary structure, binds to the N-terminal domain of the chaperone ClpA.

In terms of biological role, involved in the modulation of the specificity of the ClpAP-mediated ATP-dependent protein degradation. This chain is ATP-dependent Clp protease adapter protein ClpS, found in Bordetella avium (strain 197N).